A 265-amino-acid polypeptide reads, in one-letter code: Energy-coupling factor transporter ATP-binding protein EcfA1 (265 aa).

Positions Ile2–Asp236 constitute an ABC transporter domain. ATP is bound at residue Gly36 to Ser43.

The protein belongs to the ABC transporter superfamily. Energy-coupling factor EcfA family. Forms a stable energy-coupling factor (ECF) transporter complex composed of 2 membrane-embedded substrate-binding proteins (S component), 2 ATP-binding proteins (A component) and 2 transmembrane proteins (T component).

The protein resides in the cell membrane. Functionally, ATP-binding (A) component of a common energy-coupling factor (ECF) ABC-transporter complex. Unlike classic ABC transporters this ECF transporter provides the energy necessary to transport a number of different substrates. The sequence is that of Energy-coupling factor transporter ATP-binding protein EcfA1 from Mycoplasmopsis pulmonis (strain UAB CTIP) (Mycoplasma pulmonis).